A 312-amino-acid chain; its full sequence is DNA-directed RNA polymerase subunit alpha (312 aa).

Residues 1 to 226 (MIEFEKPNIT…EHFKVFMSTD (226 aa)) form an alpha N-terminal domain (alpha-NTD) region. Positions 243 to 312 (NEKKLEMTIE…DLGLSLRQDD (70 aa)) are alpha C-terminal domain (alpha-CTD).

It belongs to the RNA polymerase alpha chain family. Homodimer. The RNAP catalytic core consists of 2 alpha, 1 beta, 1 beta' and 1 omega subunit. When a sigma factor is associated with the core the holoenzyme is formed, which can initiate transcription.

The catalysed reaction is RNA(n) + a ribonucleoside 5'-triphosphate = RNA(n+1) + diphosphate. Functionally, DNA-dependent RNA polymerase catalyzes the transcription of DNA into RNA using the four ribonucleoside triphosphates as substrates. This chain is DNA-directed RNA polymerase subunit alpha, found in Lactobacillus johnsonii (strain CNCM I-12250 / La1 / NCC 533).